Reading from the N-terminus, the 353-residue chain is Photosystem II D2 protein (353 aa).

Position 2 is an N-acetylthreonine (T2). A Phosphothreonine modification is found at T2. The helical transmembrane segment at C41–T61 threads the bilayer. Chlorophyll a is bound at residue H118. The helical transmembrane segment at G125 to P141 threads the bilayer. Pheophytin a is bound by residues Q130 and N143. The helical transmembrane segment at V153–S166 threads the bilayer. Residue H198 coordinates chlorophyll a. Residues A208–D228 traverse the membrane as a helical segment. A plastoquinone is bound by residues H215 and F262. H215 contacts Fe cation. Fe cation is bound at residue H269. A helical membrane pass occupies residues G279–R295.

It belongs to the reaction center PufL/M/PsbA/D family. PSII is composed of 1 copy each of membrane proteins PsbA, PsbB, PsbC, PsbD, PsbE, PsbF, PsbH, PsbI, PsbJ, PsbK, PsbL, PsbM, PsbT, PsbX, PsbY, PsbZ, Psb30/Ycf12, at least 3 peripheral proteins of the oxygen-evolving complex and a large number of cofactors. It forms dimeric complexes. The D1/D2 heterodimer binds P680, chlorophylls that are the primary electron donor of PSII, and subsequent electron acceptors. It shares a non-heme iron and each subunit binds pheophytin, quinone, additional chlorophylls, carotenoids and lipids. There is also a Cl(-1) ion associated with D1 and D2, which is required for oxygen evolution. The PSII complex binds additional chlorophylls, carotenoids and specific lipids. serves as cofactor.

Its subcellular location is the plastid. The protein localises to the chloroplast thylakoid membrane. It catalyses the reaction 2 a plastoquinone + 4 hnu + 2 H2O = 2 a plastoquinol + O2. In terms of biological role, photosystem II (PSII) is a light-driven water:plastoquinone oxidoreductase that uses light energy to abstract electrons from H(2)O, generating O(2) and a proton gradient subsequently used for ATP formation. It consists of a core antenna complex that captures photons, and an electron transfer chain that converts photonic excitation into a charge separation. The D1/D2 (PsbA/PsbD) reaction center heterodimer binds P680, the primary electron donor of PSII as well as several subsequent electron acceptors. D2 is needed for assembly of a stable PSII complex. The sequence is that of Photosystem II D2 protein from Cucumis sativus (Cucumber).